Reading from the N-terminus, the 580-residue chain is MTPDIQAPFLSLLLLFPVLTVANVPTLTTSDSINPRRTTPVSTTQSSPTSSPTKETSWSTTTTLLTASSPAPSPAASPGHDGASTPTSSPAPSPAASPGHDGASTPTSSPAPSPAASPGHDGASTPTSSPAPSPAASPGHDGASTPTSSPAPSPAASPGHNGTSSPTGSPAPSPAASPGHDGASTPTSSPAPSPAASPGHNGTSSPTGSPAPSPAASPGHDGASTPTSSPAPSPAASPGHNGTSSPTGSPAPSPTASPGHDSAPSLTSSPAPSPTASPGQHGASSPTSSDTSSMTTRSMSSSMVTSAHKGTSSRATMTPVSKGTPSSVPSSETAPTAASHITRTAASSPSIALSTSSNPKTSQQLSVRVSLYFLSFRITNLQFNSSLENPQTSYYQELQRSIWGLILQIYKQRDFLGLSEIKFRPGSVVVELTLAFREGTTAEWVKAQFSQLEAHAASYNLTISGVSVYSAPFPSSAQAGSGVPGWGIALLVLVCVLVALAIIYLIALVVCQCGRKKCEQLDVFPTLDAYHPMSEYSTYHTHGRYVPPGSTKRSPYEEVSAGNGGSNLSYTNLAATSANL.

An N-terminal signal peptide occupies residues 1–22 (MTPDIQAPFLSLLLLFPVLTVA). The Extracellular portion of the chain corresponds to 23–489 (NVPTLTTSDS…GSGVPGWGIA (467 aa)). Residues 28–37 (TTSDSINPRR) show a composition bias toward polar residues. The segment at 28–359 (TTSDSINPRR…SIALSTSSNP (332 aa)) is disordered. Low complexity predominate over residues 38 to 88 (TTPVSTTQSSPTSSPTKETSWSTTTTLLTASSPAPSPAASPGHDGASTPTS). 11 repeat units span residues 70–89 (PAPS…PTSS), 90–109 (PAPS…PTSS), 110–129 (PAPS…PTSS), 130–149 (PAPS…PTSS), 150–169 (PAPS…PTGS), 170–189 (PAPS…PTSS), 190–209 (PAPS…PTGS), 210–229 (PAPS…PTSS), 230–249 (PAPS…PTGS), 250–269 (PAPS…LTSS), and 270–289 (PAPS…PTSS). An 11 X 20 AA approximate tandem repeats of P-A-P-S-P-A-A-S-P-G-H-D-G-A-S-T-P-T-S-S region spans residues 70-289 (PAPSPAASPG…QHGASSPTSS (220 aa)). Residues S73, S77, and S84 are each glycosylated (O-linked (GalNAc...) serine). O-linked (GalNAc...) threonine glycans are attached at residues T85 and T87. S88 and S89 each carry an O-linked (GalNAc...) serine glycan. 9 stretches are compositionally biased toward low complexity: residues 96-108 (ASPG…TPTS), 116-128 (ASPG…TPTS), 136-148 (ASPG…TPTS), 156-168 (ASPG…SPTG), 176-188 (ASPG…TPTS), 196-208 (ASPG…SPTG), 216-228 (ASPG…TPTS), 236-248 (ASPG…SPTG), and 256-306 (ASPG…MVTS). Residue N161 is glycosylated (N-linked (GlcNAc...) asparagine). N-linked (GlcNAc...) asparagine glycosylation occurs at N201. N241 carries an N-linked (GlcNAc...) asparagine glycan. Polar residues predominate over residues 308–344 (HKGTSSRATMTPVSKGTPSSVPSSETAPTAASHITRT). Residues 345–357 (AASSPSIALSTSS) show a composition bias toward low complexity. Residues 368-475 (RVSLYFLSFR…VSVYSAPFPS (108 aa)) enclose the SEA domain. N-linked (GlcNAc...) asparagine glycans are attached at residues N384 and N460. A helical membrane pass occupies residues 490-510 (LLVLVCVLVALAIIYLIALVV). 2 S-palmitoyl cysteine lipidation sites follow: C511 and C513. The Cytoplasmic portion of the chain corresponds to 511–580 (CQCGRKKCEQ…TNLAATSANL (70 aa)). The segment at 519–555 (EQLDVFPTLDAYHPMSEYSTYHTHGRYVPPGSTKRSP) is interaction with P53. Y530 carries the phosphotyrosine; by PDGFR modification. Positions 530–533 (YHPM) match the Interaction with GRB2 motif. Position 539 is a phosphotyrosine (Y539). The disordered stretch occupies residues 544–563 (RYVPPGSTKRSPYEEVSAGN). A Phosphotyrosine; by PDGFR modification is found at Y545. The required for interaction with GSK3B stretch occupies residues 550 to 557 (STKRSPYE). Position 551 is a phosphothreonine; by PKC/PRKCD (T551). S554 bears the Phosphoserine; by GSK3-beta mark. Phosphotyrosine; by CSK, EGFR and SRC is present on Y556. Residues 556–559 (YEEV) carry the Interaction with SRC and ESR1 motif. The interval 560–568 (SAGNGGSNL) is required for interaction with beta- and gamma-catenins. At Y570 the chain carries Phosphotyrosine. A Required for interaction with AP1S2 motif is present at residues 570-572 (YTN).

In terms of assembly, the alpha subunit forms a tight, non-covalent heterodimeric complex with the proteolytically-released beta subunit. Binds directly the SH2 domain of GRB2, and forms a MUC1/GRB2/SOS1 complex involved in RAS signaling. The cytoplasmic tail (MUC1CT) interacts with several proteins such as, SRC, CTNNB1 and ERBs. Interaction with the SH2 domain of CSK decreases interaction with GSK3B. Interacts with CTNNB1/beta-catenin and JUP/gamma-catenin and promotes cell adhesion. Interaction with JUP/gamma-catenin is induced by heregulin. Binds PRKCD, ERBB2, ERBB3 and ERBB4. Heregulin (HRG) stimulates the interaction with ERBB2 and, to a much lesser extent, the interaction with ERBB3 and ERBB4. Interacts with P53 in response to DNA damage. Interacts with KLF4. Interacts with estrogen receptor alpha/ESR1, through its DNA-binding domain, and stimulates its transcription activity. Binds ADAM17. In terms of processing, highly glycosylated (N- and O-linked carbohydrates and sialic acid). O-linked glycosylation consists mainly of GalNAc, galactose, and sialic acid. The ratio from pools of milk from different dairy breeds is GalNAc: GlcNAc:galactose:mannose:sialic acid is 14:1:10:1:15. Post-translationally, proteolytic cleavage in the SEA domain occurs in the endoplasmic reticulum by an autoproteolytic mechanism and requires the full-length SEA domain as well as requiring a Ser, Thr or Cys residue at the P + 1 site. Ectodomain shedding is mediated by ADAM17 in uterine epithelial cells. Dual palmitoylation on cysteine residues in the CQC motif is required for recycling from endosomes back to the plasma membrane. In terms of processing, phosphorylated on tyrosines and serine residues in the C-terminal. Phosphorylation on tyrosines in the C-terminal increases the nuclear location of MUC1 and beta-catenin. Phosphorylation by PKC delta induces binding of MUC1 to beta-catenin/CTNNB1 and thus decreases the formation of the beta-catenin/E-cadherin complex. Src-mediated phosphorylation inhibits interaction with GSK3B. Csk- or Src- or EGFR-mediated phosphorylation on Tyr-556 increases binding to beta-catenin/CTNNB1. GSK3B-mediated phosphorylation on Ser-554 decreases this interaction but restores the formation of the beta-cadherin/E-cadherin complex. On T-cell receptor activation, phosphorylated by LCK. PDGFR-mediated phosphorylation increases nuclear colocalization of MUC1CT and CTNNB1. Expressed on the apical surface of epithelia cells, and on the milk fat globule membrane (MGGM).

The protein localises to the apical cell membrane. Its subcellular location is the cell membrane. It is found in the cytoplasm. It localises to the nucleus. In terms of biological role, the alpha subunit has cell adhesive properties. May provide a protective layer on epithelial cells against bacterial and enzyme attack. Functionally, the beta subunit contains a C-terminal domain which is involved in cell signaling, through phosphorylations and protein-protein interactions. Modulates signaling in ERK, Src and NF-kappa-B pathways. In activated T-cells, influences directly or indirectly the Ras/MAPK pathway. Promotes tumor progression. Regulates P53-mediated transcription and determines cell fate in the genotoxic stress response. Binds, together with KLF4, the PE21 promoter element of P53 and represses P53 activity. The sequence is that of Mucin-1 (MUC1) from Bos taurus (Bovine).